The primary structure comprises 208 residues: MNSLSTIAFSLGLLLVTATAFPTPGPLGEDFKDDTTSDRLLLTSPDKTEALIKYILGKISAMRKEMCEKYDKCENSKEALAENNLNLPKMAEKDGCFQSGFNQETCLMRITTGLLEYQIYLDYLQNEYEGDKGSIEAVQISIKALAQILRQKVKNPDEVTTPDPTTNASLMNNLQSQNDDWMRNTKIILILRSLENFLQFSLRAVRIK.

Positions 1–20 (MNSLSTIAFSLGLLLVTATA) are cleaved as a signal peptide. Cys67 and Cys73 form a disulfide bridge. At Ser76 the chain carries Phosphoserine. The cysteines at positions 96 and 106 are disulfide-linked. A glycan (N-linked (GlcNAc...) asparagine) is linked at Asn167.

This sequence belongs to the IL-6 superfamily. As to quaternary structure, component of a hexamer of two molecules each of IL6, IL6R and IL6ST; first binds to IL6R to associate with the signaling subunit IL6ST. Interacts with IL6R (via the N-terminal ectodomain); this interaction may be affected by IL6R-binding with SORL1, hence decreasing IL6 cis signaling. Interacts with SORL1 (via the N-terminal ectodomain); this interaction leads to IL6 internalization and lysosomal degradation. May form a trimeric complex with the soluble SORL1 ectodomain and soluble IL6R receptor; this interaction might stabilize circulating IL6, hence promoting IL6 trans signaling.

Its subcellular location is the secreted. Functionally, cytokine with a wide variety of biological functions in immunity, tissue regeneration, and metabolism. Binds to IL6R, then the complex associates to the signaling subunit IL6ST/gp130 to trigger the intracellular IL6-signaling pathway. The interaction with the membrane-bound IL6R and IL6ST stimulates 'classic signaling', whereas the binding of IL6 and soluble IL6R to IL6ST stimulates 'trans-signaling'. Alternatively, 'cluster signaling' occurs when membrane-bound IL6:IL6R complexes on transmitter cells activate IL6ST receptors on neighboring receiver cells. Its function is as follows. IL6 is a potent inducer of the acute phase response. Rapid production of IL6 contributes to host defense during infection and tissue injury, but excessive IL6 synthesis is involved in disease pathology. In the innate immune response, is synthesized by myeloid cells, such as macrophages and dendritic cells, upon recognition of pathogens through toll-like receptors (TLRs) at the site of infection or tissue injury. In the adaptive immune response, is required for the differentiation of B cells into immunoglobulin-secreting cells. Plays a major role in the differentiation of CD4(+) T cell subsets. Essential factor for the development of T follicular helper (Tfh) cells that are required for the induction of germinal-center formation. Required to drive naive CD4(+) T cells to the Th17 lineage. Also required for proliferation of myeloma cells and the survival of plasmablast cells. Acts as an essential factor in bone homeostasis and on vessels directly or indirectly by induction of VEGF, resulting in increased angiogenesis activity and vascular permeability. Induces, through 'trans-signaling' and synergistically with IL1B and TNF, the production of VEGF. Involved in metabolic controls, is discharged into the bloodstream after muscle contraction increasing lipolysis and improving insulin resistance. 'Trans-signaling' in central nervous system also regulates energy and glucose homeostasis. Mediates, through GLP-1, crosstalk between insulin-sensitive tissues, intestinal L cells and pancreatic islets to adapt to changes in insulin demand. Also acts as a myokine. Plays a protective role during liver injury, being required for maintenance of tissue regeneration. Also has a pivotal role in iron metabolism by regulating HAMP/hepcidin expression upon inflammation or bacterial infection. Through activation of IL6ST-YAP-NOTCH pathway, induces inflammation-induced epithelial regeneration. The protein is Interleukin-6 (IL6) of Delphinapterus leucas (Beluga whale).